The following is a 203-amino-acid chain: Glycerol-3-phosphate acyltransferase (203 aa).

6 helical membrane-spanning segments follow: residues Ile3 to Ser23, Lys51 to Val71, Phe74 to Leu94, Ala116 to Phe136, Ser140 to Thr160, and Pro164 to Trp178.

The protein belongs to the PlsY family. As to quaternary structure, probably interacts with PlsX.

The protein resides in the cell inner membrane. The enzyme catalyses an acyl phosphate + sn-glycerol 3-phosphate = a 1-acyl-sn-glycero-3-phosphate + phosphate. It participates in lipid metabolism; phospholipid metabolism. In terms of biological role, catalyzes the transfer of an acyl group from acyl-phosphate (acyl-PO(4)) to glycerol-3-phosphate (G3P) to form lysophosphatidic acid (LPA). This enzyme utilizes acyl-phosphate as fatty acyl donor, but not acyl-CoA or acyl-ACP. The protein is Glycerol-3-phosphate acyltransferase of Burkholderia mallei (strain ATCC 23344).